The primary structure comprises 239 residues: Norbelladine 4'-O-methyltransferase 2 (239 aa).

S-adenosyl-L-methionine-binding positions include Val55, Glu77, Gly79 to Val80, Ser85, Asp103, and Ala132. Asp155 serves as a coordination point for a divalent metal cation. S-adenosyl-L-methionine is bound at residue Asp157. A divalent metal cation is bound by residues Asp181 and Asn182.

This sequence belongs to the class I-like SAM-binding methyltransferase superfamily. Cation-dependent O-methyltransferase family. Mg(2+) is required as a cofactor.

The enzyme catalyses norbelladine + S-adenosyl-L-methionine = 4'-O-methylnorbelladine + S-adenosyl-L-homocysteine + H(+). The protein operates within alkaloid biosynthesis. Its function is as follows. 4'-O-methyltransferase converting norbelladine to 4'-O-methylnorbelladine. 4'-O-methylnorbelladine is a precursor to all Amaryllidaceae alkaloids such as galanthamine, lycorine and haemanthamine, and including haemanthamine- and crinamine-type alkaloids, promising anticancer agents. This chain is Norbelladine 4'-O-methyltransferase 2, found in Narcissus aff. pseudonarcissus MK-2014 (Daffodil).